The following is a 397-amino-acid chain: Izumo sperm-egg fusion protein 1 (397 aa).

Positions 1-21 (MGPHFTLLLAALANCLCPGRP) are cleaved as a signal peptide. Intrachain disulfides connect Cys-22-Cys-149, Cys-25-Cys-152, Cys-135-Cys-159, Cys-139-Cys-165, and Cys-182-Cys-233. At 22–319 (CIKCDQFVTD…QNPEKKMKTR (298 aa)) the chain is on the extracellular side. Residues 148–160 (WCLKCEKQLHICR) are important for interaction with IZUMO1R. Positions 167 to 251 (ERHIEVHRSE…HATVIRYDVT (85 aa)) constitute an Ig-like C2-type domain. The N-linked (GlcNAc...) asparagine glycan is linked to Asn-204. The tract at residues 271 to 292 (EHETPVHVTPQTPPGQEPESEL) is disordered. The helical transmembrane segment at 320 to 340 (LLILLTLGFVVLVASIIISVL) threads the bilayer. Residues 341 to 397 (HFRKVSAKLKNASDEVKPTASGSKSDQSLSQQMGLKKASQADFNSDYSGDKSEATEN) lie on the Cytoplasmic side of the membrane. Residues 351 to 397 (NASDEVKPTASGSKSDQSLSQQMGLKKASQADFNSDYSGDKSEATEN) form a disordered region. Positions 360 to 373 (ASGSKSDQSLSQQM) are enriched in polar residues. At Ser-379 the chain carries Phosphoserine. Positions 388-397 (SGDKSEATEN) are enriched in basic and acidic residues.

This sequence belongs to the Izumo family. As to quaternary structure, monomer, homodimer; disulfide-linked and homooligomer; depending on the context. Interacts with IZUMO1R/JUNO. IZUMO1 and IZUMO1R/JUNO form a complex with 1:1 stoichiometry. In gamete recognition, IZUMO1R/JUNO first binds to monomeric IZUMO1. The weak, but specific interaction with IZUMO1R/JUNO induces IZUMO1 homodimerization. The process follows a tight binding phase where IZUMO1 bends the entire structure towards the sperm membrane side through a thiol-disulfide exchange reaction. The molecule no longer binds to IZUMO1R/JUNO and instead binds to a putative second oocyte receptor. Interacts with ACE3. Part of a oolemmal binding multimeric complex (IZUMO1 complex) composed at least of IZUMO1 and GLIPR1L1; the complex assemblage is influenced by the maturation status of the male germ cell. Interacts with GLIPR1L1. Interacts with FREY; the interaction retains IZUMO1 at the endoplasmic reticulum membrane and coordinates IZUMO1 complex assembly. Interacts with WDR54. Forms a complex with SPACA6 and TMEM81 on spermatocyte cell membrane. In terms of processing, N-glycosylated. Glycosylation is not essential for fusion and for proper protein trafficking in sperm. Post-translationally, phosphorylated. The cytoplasmic C-terminus is phosphorylated and undergoes phosphorylation changes during epididymal transit. As to expression, sperm-specific (at protein level). Detectable on sperm surface only after the acrosome reaction. Expressed in spermatozoa, more abundantly expressed in the head than the tail (at protein level).

Its subcellular location is the cell membrane. The protein localises to the cytoplasmic vesicle. It localises to the secretory vesicle. It is found in the acrosome membrane. Its function is as follows. Essential sperm cell-surface protein required for fertilization by acting as a ligand for IZUMO1R/JUNO receptor on egg. The IZUMO1:IZUMO1R/JUNO interaction is a necessary adhesion event between sperm and egg that is required for fertilization but is not sufficient for cell fusion. The ligand-receptor interaction probably does not act as a membrane 'fusogen'. Plays a critical role in sperm-oolemma binding prior to plasma membrane fusion. Can mediate cell-cell fusion in cultured mammalian cells independently of its binding to IZUMO1R/JUNO. The chain is Izumo sperm-egg fusion protein 1 from Mus musculus (Mouse).